The following is a 644-amino-acid chain: uncharacterized protein (644 aa).

Disordered stretches follow at residues 1 to 35 (MSSHDDDHTPLLISDPSVNKPFRSRTPSPEREYCS) and 48 to 106 (GNSH…SHHN). Residue Ser28 is modified to Phosphoserine. Over residues 58 to 70 (NGASSSNNNVAKS) the composition is skewed to low complexity. A compositionally biased stretch (polar residues) spans 83–106 (YDSTSNSNEPISFNEPDSSNSHHN). 12 helical membrane-spanning segments follow: residues 131-151 (ILPLNFINAFSWGMIEIPLLF), 190-210 (AAFGSLAAFLGLFSTAYYGTM), 218-238 (LVLFITVSFLLLGDLWLLYQS), 245-265 (YFVLFAAALKGLGGYISTVVA), 286-306 (LNFAAYHLGTALGPSLSGFIV), 314-334 (YVFYITSTFWIIYLLYVWLIL), 398-418 (VLLAAILISLTLLGAGSMGLL), 435-455 (LILSTDSFASSITLVALFPLL), 522-542 (VWNAQLGYAIALSAAVLLAVA), 546-566 (VALFTAVIIQAISNMVVPCVQ), 583-603 (AAFAVFEAVALIIRGPIYAFV), and 614-634 (NMIFFLSAVIYGCCFIIIFFM).

Its subcellular location is the membrane. This is an uncharacterized protein from Schizosaccharomyces pombe (strain 972 / ATCC 24843) (Fission yeast).